We begin with the raw amino-acid sequence, 139 residues long: Large ribosomal subunit protein uL16 (139 aa).

It belongs to the universal ribosomal protein uL16 family. In terms of assembly, part of the 50S ribosomal subunit.

Its function is as follows. Binds 23S rRNA and is also seen to make contacts with the A and possibly P site tRNAs. The protein is Large ribosomal subunit protein uL16 of Treponema pallidum (strain Nichols).